Here is a 153-residue protein sequence, read N- to C-terminus: UPF0756 membrane protein BCQ_4399 (153 aa).

4 consecutive transmembrane segments (helical) span residues 8–28 (FLFILLIIGLIAKNQSLTVAI), 54–74 (LGVTVITIAVLVPIATGEIGF), 87–107 (WIALASGVAVALLAKGGVQLL), and 117–137 (LVFGTIIAVALFNGVAVGPLI).

The protein belongs to the UPF0756 family.

The protein localises to the cell membrane. The chain is UPF0756 membrane protein BCQ_4399 from Bacillus cereus (strain Q1).